The chain runs to 512 residues: Kynurenine 3-monooxygenase (512 aa).

The protein belongs to the aromatic-ring hydroxylase family. KMO subfamily. The cofactor is FAD.

Its subcellular location is the mitochondrion outer membrane. The enzyme catalyses L-kynurenine + NADPH + O2 + H(+) = 3-hydroxy-L-kynurenine + NADP(+) + H2O. Its pathway is cofactor biosynthesis; NAD(+) biosynthesis; quinolinate from L-kynurenine: step 1/3. Its function is as follows. Catalyzes the hydroxylation of L-kynurenine (L-Kyn) to form 3-hydroxy-L-kynurenine (L-3OHKyn). Required for synthesis of quinolinic acid. This Aspergillus clavatus (strain ATCC 1007 / CBS 513.65 / DSM 816 / NCTC 3887 / NRRL 1 / QM 1276 / 107) protein is Kynurenine 3-monooxygenase (bna4).